A 297-amino-acid chain; its full sequence is Probable GTP 3',8-cyclase (297 aa).

The Radical SAM core domain occupies 4-227; sequence RYGRQIRSFR…MQNRKKYVID (224 aa). R13 is a GTP binding site. [4Fe-4S] cluster-binding residues include C20 and C24. Position 26 (Y26) interacts with S-adenosyl-L-methionine. C27 serves as a coordination point for [4Fe-4S] cluster. K61 is a binding site for GTP. Position 65 (G65) interacts with S-adenosyl-L-methionine. A GTP-binding site is contributed by T91. An S-adenosyl-L-methionine-binding site is contributed by S115. K152 is a GTP binding site. 2 residues coordinate [4Fe-4S] cluster: C243 and C246. 248–250 is a GTP binding site; the sequence is RIR. [4Fe-4S] cluster is bound at residue C260.

This sequence belongs to the radical SAM superfamily. MoaA family. The cofactor is [4Fe-4S] cluster.

The enzyme catalyses GTP + AH2 + S-adenosyl-L-methionine = (8S)-3',8-cyclo-7,8-dihydroguanosine 5'-triphosphate + 5'-deoxyadenosine + L-methionine + A + H(+). Its pathway is cofactor biosynthesis; molybdopterin biosynthesis. In terms of biological role, catalyzes the cyclization of GTP to (8S)-3',8-cyclo-7,8-dihydroguanosine 5'-triphosphate. This is Probable GTP 3',8-cyclase from Methanococcus maripaludis (strain DSM 14266 / JCM 13030 / NBRC 101832 / S2 / LL).